The following is a 217-amino-acid chain: Large ribosomal subunit protein uL4 (217 aa).

Positions 42–100 are disordered; it reads RAAARQGTHSTKTRGDVSGGGRKPYRQKGTGRARQGSTRAPQFTGGGVVHGPKPRDYSQ.

It belongs to the universal ribosomal protein uL4 family. Part of the 50S ribosomal subunit.

In terms of biological role, one of the primary rRNA binding proteins, this protein initially binds near the 5'-end of the 23S rRNA. It is important during the early stages of 50S assembly. It makes multiple contacts with different domains of the 23S rRNA in the assembled 50S subunit and ribosome. Its function is as follows. Forms part of the polypeptide exit tunnel. The protein is Large ribosomal subunit protein uL4 of Mycolicibacterium paratuberculosis (strain ATCC BAA-968 / K-10) (Mycobacterium paratuberculosis).